The chain runs to 69 residues: NAD(P)H-quinone oxidoreductase subunit L (69 aa).

The next 2 membrane-spanning stretches (helical) occupy residues 5 to 25 and 40 to 60; these read LILL…ITYF and GFMY…SPFL.

It belongs to the complex I NdhL subunit family. NDH-1 can be composed of about 15 different subunits; different subcomplexes with different compositions have been identified which probably have different functions.

The protein localises to the cellular thylakoid membrane. It catalyses the reaction a plastoquinone + NADH + (n+1) H(+)(in) = a plastoquinol + NAD(+) + n H(+)(out). The catalysed reaction is a plastoquinone + NADPH + (n+1) H(+)(in) = a plastoquinol + NADP(+) + n H(+)(out). In terms of biological role, NDH-1 shuttles electrons from an unknown electron donor, via FMN and iron-sulfur (Fe-S) centers, to quinones in the respiratory and/or the photosynthetic chain. The immediate electron acceptor for the enzyme in this species is believed to be plastoquinone. Couples the redox reaction to proton translocation, and thus conserves the redox energy in a proton gradient. Cyanobacterial NDH-1 also plays a role in inorganic carbon-concentration. The protein is NAD(P)H-quinone oxidoreductase subunit L of Acaryochloris marina (strain MBIC 11017).